Here is a 741-residue protein sequence, read N- to C-terminus: Polyribonucleotide nucleotidyltransferase (741 aa).

2 residues coordinate Mg(2+): aspartate 489 and aspartate 495. A KH domain is found at 556–615 (PKIDSIQIPVDKIKVVIGKGGETIDKIIAETGVTIDIDEEGLVQIFSSDQDAIDRAKTII). The S1 motif domain maps to 625–693 (GEVYTVPVVR…EKGRVDASIK (69 aa)). The interval 695-741 (LLPKPEKNEDGENGEEHRHCCCSHHKPDHHNESVEAPKKSDESETKE) is disordered. 2 stretches are compositionally biased toward basic and acidic residues: residues 698–713 (KPEKNEDGENGEEHRH) and 723–741 (HHNESVEAPKKSDESETKE).

This sequence belongs to the polyribonucleotide nucleotidyltransferase family. Mg(2+) is required as a cofactor.

It localises to the cytoplasm. The enzyme catalyses RNA(n+1) + phosphate = RNA(n) + a ribonucleoside 5'-diphosphate. Functionally, involved in mRNA degradation. Catalyzes the phosphorolysis of single-stranded polyribonucleotides processively in the 3'- to 5'-direction. The sequence is that of Polyribonucleotide nucleotidyltransferase from Streptococcus thermophilus (strain CNRZ 1066).